The primary structure comprises 360 residues: Ribosomal RNA large subunit methyltransferase M (360 aa).

S-adenosyl-L-methionine is bound by residues Ser-187, 220-223 (CPGG), Asp-239, Asp-259, and Asp-276. Lys-305 serves as the catalytic Proton acceptor.

Belongs to the class I-like SAM-binding methyltransferase superfamily. RNA methyltransferase RlmE family. RlmM subfamily. As to quaternary structure, monomer.

It localises to the cytoplasm. The enzyme catalyses cytidine(2498) in 23S rRNA + S-adenosyl-L-methionine = 2'-O-methylcytidine(2498) in 23S rRNA + S-adenosyl-L-homocysteine + H(+). Its function is as follows. Catalyzes the 2'-O-methylation at nucleotide C2498 in 23S rRNA. The sequence is that of Ribosomal RNA large subunit methyltransferase M from Shewanella pealeana (strain ATCC 700345 / ANG-SQ1).